Reading from the N-terminus, the 575-residue chain is Beta-amylase 1, chloroplastic (575 aa).

Residues 1–41 (MALNLSHQLGVLAGTPIKSGEMTDSSLLSISPPSARMMTPK) constitute a chloroplast transit peptide. Residues S55 and S59 each carry the phosphoserine modification. The cysteines at positions 73 and 511 are disulfide-linked. 3 residues coordinate substrate: D147, H187, and D195. Residue E279 is the Proton donor of the active site. Residues K392, H397, and T439 each coordinate substrate. Residue E477 is the Proton acceptor of the active site. Substrate is bound by residues 478 to 479 (NA) and R517.

It belongs to the glycosyl hydrolase 14 family. Expressed in leaves, roots, flowers, pollen, and seeds.

It localises to the plastid. The protein resides in the chloroplast. The catalysed reaction is Hydrolysis of (1-&gt;4)-alpha-D-glucosidic linkages in polysaccharides so as to remove successive maltose units from the non-reducing ends of the chains.. Its activity is regulated as follows. Redox regulation; active in reducing conditions, inactive in oxidizing conditions. Thioredoxins f1, m1, and y1 mediate the reversible reductive activation of oxidized BAM1. Its function is as follows. Beta-amylase activity. Can use p-nitrophenyl maltopentaoside (PNPG5) as substrate only in reduced form. Can play a minor role in the starch degradation and maltose metabolism in chloroplasts during the night. More active on phosphorylated glucan. Interacts directly with starch or other alpha-1,4-glucan. The chain is Beta-amylase 1, chloroplastic (BAM1) from Arabidopsis thaliana (Mouse-ear cress).